Here is a 739-residue protein sequence, read N- to C-terminus: Malate synthase G (739 aa).

Residues 1–18 (MTEQELLSAQTADNAGTD) are compositionally biased toward polar residues. Residues 1–23 (MTEQELLSAQTADNAGTDSTERV) are disordered. Acetyl-CoA-binding positions include valine 135, 142–143 (RF), serine 292, and arginine 329. Arginine 356 serves as the catalytic Proton acceptor. Glyoxylate-binding positions include arginine 356, glutamate 447, and 472–475 (GFLD). 2 residues coordinate Mg(2+): glutamate 447 and aspartate 475. Proline 556 is a binding site for acetyl-CoA. Cysteine 633 carries the post-translational modification Cysteine sulfenic acid (-SOH). Residue aspartate 647 is the Proton donor of the active site.

It belongs to the malate synthase family. GlcB subfamily. As to quaternary structure, monomer. Requires Mg(2+) as cofactor.

The protein resides in the cytoplasm. It carries out the reaction glyoxylate + acetyl-CoA + H2O = (S)-malate + CoA + H(+). It participates in carbohydrate metabolism; glyoxylate cycle; (S)-malate from isocitrate: step 2/2. Its activity is regulated as follows. Inhibited by oxalate, glycolate and ATP. Involved in the glycolate utilization. Catalyzes the condensation and subsequent hydrolysis of acetyl-coenzyme A (acetyl-CoA) and glyoxylate to form malate and CoA. This Corynebacterium glutamicum (strain ATCC 13032 / DSM 20300 / JCM 1318 / BCRC 11384 / CCUG 27702 / LMG 3730 / NBRC 12168 / NCIMB 10025 / NRRL B-2784 / 534) protein is Malate synthase G.